The chain runs to 479 residues: Ribulose bisphosphate carboxylase large chain 2 (479 aa).

N116 and T166 together coordinate substrate. K168 acts as the Proton acceptor in catalysis. Residue K170 participates in substrate binding. Residues K194, D196, and E197 each coordinate Mg(2+). K194 carries the post-translational modification N6-carboxylysine. H287 functions as the Proton acceptor in the catalytic mechanism. Positions 288, 320, and 372 each coordinate substrate.

This sequence belongs to the RuBisCO large chain family. Type I subfamily. As to quaternary structure, heterohexadecamer of 8 large chains and 8 small chains. Requires Mg(2+) as cofactor.

The enzyme catalyses 2 (2R)-3-phosphoglycerate + 2 H(+) = D-ribulose 1,5-bisphosphate + CO2 + H2O. It catalyses the reaction D-ribulose 1,5-bisphosphate + O2 = 2-phosphoglycolate + (2R)-3-phosphoglycerate + 2 H(+). Functionally, ruBisCO catalyzes two reactions: the carboxylation of D-ribulose 1,5-bisphosphate, the primary event in carbon dioxide fixation, as well as the oxidative fragmentation of the pentose substrate. Both reactions occur simultaneously and in competition at the same active site. The chain is Ribulose bisphosphate carboxylase large chain 2 from Bradyrhizobium sp. (strain BTAi1 / ATCC BAA-1182).